Here is a 309-residue protein sequence, read N- to C-terminus: Histidine protein methyltransferase 1 homolog (309 aa).

2 disordered regions span residues 1-37 and 79-111; these read MSFKFNFQVDEDENDNGNNNEQNNEESKLDISEFDSS and KPFKGNQDNNNDNNVNSNDKNDNNNNNNNNNKD. Residues 25–37 show a composition bias toward basic and acidic residues; the sequence is EESKLDISEFDSS. Positions 84-109 are enriched in low complexity; that stretch reads NQDNNNDNNVNSNDKNDNNNNNNNNN. S-adenosyl-L-methionine contacts are provided by residues 132–136, glycine 159, 179–181, 209–211, and serine 229; these read LWECS, QDY, and GDW.

Belongs to the methyltransferase superfamily. METTL18 family.

It is found in the cytoplasm. Its subcellular location is the cytosol. It localises to the nucleus. The protein resides in the nucleolus. It catalyses the reaction L-histidyl-[protein] + S-adenosyl-L-methionine = N(tele)-methyl-L-histidyl-[protein] + S-adenosyl-L-homocysteine + H(+). Protein-L-histidine N-tele-methyltransferase that probably monomethylates RPL3. Through the methylation of RPL3 may regulate the dynamics of pre-rRNA processing, ribosome biogenesis, and translation. This Dictyostelium discoideum (Social amoeba) protein is Histidine protein methyltransferase 1 homolog.